The following is a 244-amino-acid chain: MPLGLIGEKVGMTRVLLKDGTAIPVTVIKFPVNYVVQVKSVNTKDGYNALQVGAYEAKEKHLTKPLIGHFKKHGVPLLRRLWEFRVDNPEEFKSGQELRVQDVFKPGDLVDVWGISKGRGFAGVMKRWDFAGFPRSHGHRYHRAVGAIGQRTDPGRVWKGKKMPGHYGAKPVRVQGLFVVASLPEENAILVKGSALPGHNKGIVVLLPAVERIAYRKSQKLKQKRLQFIVENLVKEESTEVAES.

This sequence belongs to the universal ribosomal protein uL3 family. As to quaternary structure, part of the 50S ribosomal subunit. Forms a cluster with proteins L14 and L19.

Its function is as follows. One of the primary rRNA binding proteins, it binds directly near the 3'-end of the 23S rRNA, where it nucleates assembly of the 50S subunit. This Aquifex pyrophilus protein is Large ribosomal subunit protein uL3.